A 2446-amino-acid polypeptide reads, in one-letter code: Transcription factor HIVEP2 (2446 aa).

The segment at 1-93 (MDTGDTALGQ…YPPHRPSPYS (93 aa)) is disordered. Positions 17-28 (GETDKASGRWRQ) are enriched in basic and acidic residues. 2 C2H2-type zinc fingers span residues 189–211 (YICPYCSRACAKPSVLKKHIRSH) and 217–239 (YPCIPCGFSFKTKSNLYKHRKSH). 4 disordered regions span residues 272 to 303 (HSDGEQSTDTDEESSLFAEASDKMSPGPPIPL), 340 to 416 (ESSQ…PPNT), 543 to 563 (SNSVPTSSATNLTIPPSLRGS), and 751 to 985 (SHGH…SFER). 2 stretches are compositionally biased toward polar residues: residues 381 to 416 (SEPSLNLLSPHSKGSTDSGYFSRSESAEQQISPPNT) and 543 to 556 (SNSVPTSSATNLTI). Basic and acidic residues predominate over residues 751 to 760 (SHGHTERFDP). Residues 766–777 (QPGSPSLVSEES) show a composition bias toward polar residues. Basic and acidic residues predominate over residues 782-791 (DSDKMSDLGG). Polar residues predominate over residues 800–812 (SVIQHTNSLSRPN). Position 819 is a phosphoserine (serine 819). Residues 863–878 (PSPSQQVQQQSYHTQP) show a composition bias toward low complexity. The segment covering 892–916 (RVTEEPDKPEKEKEAQSKEPEKPVE) has biased composition (basic and acidic residues). Positions 937–943 (PKKKRLR) match the Nuclear localization signal motif. Phosphoserine is present on residues serine 950, serine 955, serine 1048, serine 1443, and serine 1447. Over residues 952 to 982 (GESSFESTGTGLSRSPSQESNLSHSSSFSMS) the composition is skewed to low complexity. Positions 1485 to 1603 (KDLSRPQKPQ…LEEEGKGHKR (119 aa)) are disordered. Composition is skewed to low complexity over residues 1510–1533 (SGSSSFSSLSPSSSQDYPSVSPSS) and 1576–1586 (SDMSMSPQSSS). 2 C2H2-type zinc fingers span residues 1799–1821 (YICEECGIRCKKPSMLKKHIRTH) and 1827–1851 (YVCKLCNFAFKTKGNLTKHMKSKAH). Disordered regions lie at residues 1882–1951 (AAEK…VNVG) and 2024–2129 (EECM…RRDL). Positions 1899 to 1925 (DAEESDGEDGDDNDDDDEDEDDFDDQG) are enriched in acidic residues. Low complexity predominate over residues 2029 to 2053 (PSEPSSSPRDFSPSSHHSSPGYDSS). A run of 10 repeats spans residues 2053 to 2056 (SPCR), 2059 to 2062 (SPKR), 2071 to 2074 (SPRR), 2083 to 2086 (SPMR), 2089 to 2092 (SPRK), 2106 to 2109 (SPRR), 2112 to 2115 (SPRR), 2118 to 2121 (SPGK), 2130 to 2133 (SPRR), and 2145 to 2148 (SPRR). Residues 2053 to 2148 (SPCRDNSPKR…TTIRAPSPRR (96 aa)) form a 10 X 4 AA tandem repeats of S-P-[RGMKC]-[RK] region. Residues 2078-2107 (PRRDLSPMRHLSPRKEAALRREMSQRDVSP) show a composition bias toward basic and acidic residues. Serine 2118 bears the Phosphoserine mark. 3 disordered regions span residues 2242 to 2325 (PALS…QEEN), 2371 to 2403 (HFSRPEPGQPCTSATHPDLHDGEKDNFGTSQTP), and 2423 to 2446 (HSSKELSSSTEESKDPSSEKSQLH). 2 positions are modified to phosphoserine: serine 2297 and serine 2301. Residues 2307–2317 (KQSTSEDSLNA) are compositionally biased toward polar residues. The segment covering 2387–2396 (PDLHDGEKDN) has biased composition (basic and acidic residues). A phosphoserine mark is found at serine 2429 and serine 2431. Basic and acidic residues predominate over residues 2433–2446 (EESKDPSSEKSQLH).

In terms of assembly, interacts with TCF4. Expressed in brain and skeletal muscle.

The protein resides in the nucleus. This protein specifically binds to the DNA sequence 5'-GGGACTTTCC-3' which is found in the enhancer elements of numerous viral promoters such as those of SV40, CMV, or HIV1. In addition, related sequences are found in the enhancer elements of a number of cellular promoters, including those of the class I MHC, interleukin-2 receptor, somatostatin receptor II, and interferon-beta genes. It may act in T-cell activation. This is Transcription factor HIVEP2 (HIVEP2) from Homo sapiens (Human).